A 346-amino-acid polypeptide reads, in one-letter code: MLKVAIVGASGYTGVELLRILHSHPEVAVTCVTSEQSAGRPVSSVFPSLRGRCDIVLENLEPVGIAEKVDIVFTALPHKAAMEVVPTFMKMGKDVIDLSADYRIHDADTYGKWYEPHLNPELLPEAVYGIPELRRAEIAEASLIANPGCYPTSVILGLAPLLKGKVIDPRSIIVDAASGTSGAGRGAKVDNLYCEVNEGFRAYGVGGVHRHIPEIEQELSLLAGSPLNITFTPHLVPMDRGILSTIYSQTAGSVKAADLIALYEAFYDGEPFVRVLPEGVLPSTAHVRGSNFCDIGITVDQRTGRVIVISAIDNLVKGASGQAVQNMNLMCGLPETLGLDLLPVFP.

Cys149 is an active-site residue.

The protein belongs to the NAGSA dehydrogenase family. Type 1 subfamily.

The protein localises to the cytoplasm. The enzyme catalyses N-acetyl-L-glutamate 5-semialdehyde + phosphate + NADP(+) = N-acetyl-L-glutamyl 5-phosphate + NADPH + H(+). Its pathway is amino-acid biosynthesis; L-arginine biosynthesis; N(2)-acetyl-L-ornithine from L-glutamate: step 3/4. Catalyzes the NADPH-dependent reduction of N-acetyl-5-glutamyl phosphate to yield N-acetyl-L-glutamate 5-semialdehyde. The chain is N-acetyl-gamma-glutamyl-phosphate reductase from Geobacter sp. (strain M21).